The chain runs to 307 residues: 4-hydroxy-tetrahydrodipicolinate synthase (307 aa).

Thr49 is a binding site for pyruvate. Residue Tyr138 is the Proton donor/acceptor of the active site. Lys166 (schiff-base intermediate with substrate) is an active-site residue. A pyruvate-binding site is contributed by Ile207.

It belongs to the DapA family. Homotetramer; dimer of dimers.

Its subcellular location is the cytoplasm. It catalyses the reaction L-aspartate 4-semialdehyde + pyruvate = (2S,4S)-4-hydroxy-2,3,4,5-tetrahydrodipicolinate + H2O + H(+). Its pathway is amino-acid biosynthesis; L-lysine biosynthesis via DAP pathway; (S)-tetrahydrodipicolinate from L-aspartate: step 3/4. Catalyzes the condensation of (S)-aspartate-beta-semialdehyde [(S)-ASA] and pyruvate to 4-hydroxy-tetrahydrodipicolinate (HTPA). This Limosilactobacillus reuteri (strain DSM 20016) (Lactobacillus reuteri) protein is 4-hydroxy-tetrahydrodipicolinate synthase.